We begin with the raw amino-acid sequence, 630 residues long: Probable potassium transport system protein Kup 2 (630 aa).

12 helical membrane-spanning segments follow: residues 14–34 (ATGF…DIGT), 56–76 (VIVL…VTAK), 108–128 (VPLL…SMIT), 145–165 (PALQ…LFAF), 176–196 (AFGP…LLHI), 214–234 (FMLS…LAVT), 255–275 (WLFF…AMVL), 293–313 (LLVP…QAVI), 352–372 (MLLL…SALA), 375–395 (YGIA…VVVW), 402–422 (PAAA…FFSA), and 427–447 (LMEG…LVWT).

Belongs to the HAK/KUP transporter (TC 2.A.72) family.

It is found in the cell inner membrane. It carries out the reaction K(+)(in) + H(+)(in) = K(+)(out) + H(+)(out). Transport of potassium into the cell. Likely operates as a K(+):H(+) symporter. The polypeptide is Probable potassium transport system protein Kup 2 (Rhodopseudomonas palustris (strain BisA53)).